Here is a 908-residue protein sequence, read N- to C-terminus: Oxysterol-binding protein 2 (908 aa).

The tract at residues 42–112 is disordered; the sequence is SAFGSGPASK…GLWPGSENGT (71 aa). Over residues 81 to 90 the composition is skewed to polar residues; that stretch reads EPGSQTTSVP. A PH domain is found at 179-271; sequence LDSYKGWLLK…WITALELAKA (93 aa). Disordered regions lie at residues 279–299, 413–445, and 822–843; these read TQSD…DNSE, RAFC…SEED, and LMER…EKQR. At serine 284 the chain carries Phosphoserine. Positions 424 to 437 are enriched in low complexity; that stretch reads SSSKSFSEGSFLTS.

It belongs to the OSBP family. In terms of assembly, interacts with CCDC159. Expressed in the testis (at protein level). Expressed in postmeiotic germ cells of the testis.

Its subcellular location is the membrane. It is found in the cytoplasmic vesicle. It localises to the secretory vesicle. The protein localises to the acrosome. In terms of biological role, binds 7-ketocholesterol. Acts during spermatid development where its function is required prior to the removal of cytoplasm from the sperm head. This is Oxysterol-binding protein 2 (Osbp2) from Mus musculus (Mouse).